Here is a 468-residue protein sequence, read N- to C-terminus: Bifunctional protein HldE (468 aa).

A ribokinase region spans residues 1–315; that stretch reads MAKKVEILVV…ELLRSRANAE (315 aa). An ATP-binding site is contributed by 192–195; that stretch reads NRKE. D260 is a catalytic residue. The tract at residues 340-468 is cytidylyltransferase; that stretch reads FTNGCFDILH…IVKRIKDADK (129 aa).

This sequence in the N-terminal section; belongs to the carbohydrate kinase PfkB family. In the C-terminal section; belongs to the cytidylyltransferase family. Homodimer.

It carries out the reaction D-glycero-beta-D-manno-heptose 7-phosphate + ATP = D-glycero-beta-D-manno-heptose 1,7-bisphosphate + ADP + H(+). It catalyses the reaction D-glycero-beta-D-manno-heptose 1-phosphate + ATP + H(+) = ADP-D-glycero-beta-D-manno-heptose + diphosphate. The protein operates within nucleotide-sugar biosynthesis; ADP-L-glycero-beta-D-manno-heptose biosynthesis; ADP-L-glycero-beta-D-manno-heptose from D-glycero-beta-D-manno-heptose 7-phosphate: step 1/4. It functions in the pathway nucleotide-sugar biosynthesis; ADP-L-glycero-beta-D-manno-heptose biosynthesis; ADP-L-glycero-beta-D-manno-heptose from D-glycero-beta-D-manno-heptose 7-phosphate: step 3/4. Functionally, catalyzes the phosphorylation of D-glycero-D-manno-heptose 7-phosphate at the C-1 position to selectively form D-glycero-beta-D-manno-heptose-1,7-bisphosphate. Its function is as follows. Catalyzes the ADP transfer from ATP to D-glycero-beta-D-manno-heptose 1-phosphate, yielding ADP-D-glycero-beta-D-manno-heptose. The protein is Bifunctional protein HldE of Campylobacter curvus (strain 525.92).